The chain runs to 215 residues: uncharacterized protein (215 aa).

Active-site charge relay system residues include S114, D162, and H194.

The protein belongs to the AB hydrolase superfamily. AB hydrolase 2 family.

This is an uncharacterized protein from Rickettsia felis (strain ATCC VR-1525 / URRWXCal2) (Rickettsia azadi).